Reading from the N-terminus, the 66-residue chain is MSRDELRIVLGAMIPNMEEGFEIKTRDGAILRVDPEWECCKEFKDGLKAEIIKQLKSKPAVVFGYS.

In terms of biological role, involved in the depression of host DNA replication. This Escherichia phage 186 (Bacteriophage 186) protein is Protein dhr (dhr).